The following is a 291-amino-acid chain: Probable cell wall amidase LytH (291 aa).

A signal peptide spans 1-40 (MKKIDSWLTKHGLKNRLTLVVIVIFIIFLILLFMFVNLSD). The SH3b domain occupies 41 to 105 (EDTGQITITE…WVAGWHTNLN (65 aa)). The region spanning 122–286 (IVLDPGHGGS…VEQAIVDGLK (165 aa)) is the MurNAc-LAA domain. Residues 123–147 (VLDPGHGGSDQGASSSTPSKSLEKN) are disordered. Polar residues predominate over residues 133–142 (QGASSSTPSK).

Belongs to the N-acetylmuramoyl-L-alanine amidase 3 family.

The protein resides in the secreted. Probably involved in cell-wall metabolism. In Staphylococcus epidermidis (strain ATCC 35984 / DSM 28319 / BCRC 17069 / CCUG 31568 / BM 3577 / RP62A), this protein is Probable cell wall amidase LytH (lytH).